We begin with the raw amino-acid sequence, 422 residues long: Glutamyl-tRNA reductase (422 aa).

Substrate-binding positions include 49–52, Ser108, 113–115, and Gln119; these read TCNR and EPQ. Cys50 serves as the catalytic Nucleophile. 188 to 193 contacts NADP(+); sequence GAGQTI.

The protein belongs to the glutamyl-tRNA reductase family. Homodimer.

It carries out the reaction (S)-4-amino-5-oxopentanoate + tRNA(Glu) + NADP(+) = L-glutamyl-tRNA(Glu) + NADPH + H(+). Its pathway is porphyrin-containing compound metabolism; protoporphyrin-IX biosynthesis; 5-aminolevulinate from L-glutamyl-tRNA(Glu): step 1/2. Its function is as follows. Catalyzes the NADPH-dependent reduction of glutamyl-tRNA(Glu) to glutamate 1-semialdehyde (GSA). In Marinomonas sp. (strain MWYL1), this protein is Glutamyl-tRNA reductase.